The sequence spans 478 residues: Catalase (478 aa).

Residues 1–23 form a disordered region; the sequence is MTNQLTTNEGQPWADNQHSQTAG. Active-site residues include H53 and N126. Y336 is a heme binding site.

It belongs to the catalase family. It depends on heme as a cofactor.

It localises to the cytoplasm. The catalysed reaction is 2 H2O2 = O2 + 2 H2O. Decomposes hydrogen peroxide into water and oxygen; serves to protect cells from the toxic effects of hydrogen peroxide. The polypeptide is Catalase (katA) (Latilactobacillus sakei (Lactobacillus sakei)).